We begin with the raw amino-acid sequence, 398 residues long: S-adenosylmethionine synthase (398 aa).

Residues 1 to 21 (MAANRRLFTSESVTEGHPDKM) are disordered. His17 contacts ATP. Mg(2+) is bound at residue Asp19. Glu45 serves as a coordination point for K(+). Glu58 and Gln101 together coordinate L-methionine. The flexible loop stretch occupies residues 101–111 (QSADIAGGVNQ). Residues 177–179 (DGK), 244–245 (RF), Asp253, 259–260 (RK), Ala276, and Lys280 each bind ATP. L-methionine is bound at residue Asp253. Lys284 is an L-methionine binding site.

This sequence belongs to the AdoMet synthase family. Homotetramer; dimer of dimers. Mg(2+) serves as cofactor. It depends on K(+) as a cofactor.

It is found in the cytoplasm. The catalysed reaction is L-methionine + ATP + H2O = S-adenosyl-L-methionine + phosphate + diphosphate. Its pathway is amino-acid biosynthesis; S-adenosyl-L-methionine biosynthesis; S-adenosyl-L-methionine from L-methionine: step 1/1. Its function is as follows. Catalyzes the formation of S-adenosylmethionine (AdoMet) from methionine and ATP. The overall synthetic reaction is composed of two sequential steps, AdoMet formation and the subsequent tripolyphosphate hydrolysis which occurs prior to release of AdoMet from the enzyme. This is S-adenosylmethionine synthase from Oceanobacillus iheyensis (strain DSM 14371 / CIP 107618 / JCM 11309 / KCTC 3954 / HTE831).